Here is a 560-residue protein sequence, read N- to C-terminus: Hypermethylated in cancer 2 protein (560 aa).

Residues 24–87 form the BTB domain; that stretch reads CDVIIVVENA…IYTGKLLSSD (64 aa). 2 disordered regions span residues 122-163 and 183-367; these read RSLL…KTKR and HCTT…GGRN. Composition is skewed to polar residues over residues 126–153 and 183–203; these read NKPTTPTNGRTSRNQRLSSTPVTPNQMS and HCTTSNSLSPSTSKNGSNGSC. Positions 224 to 242 are enriched in low complexity; sequence EEVSPSSIPQESPQSASES. The span at 243–259 shows a compositional bias: polar residues; the sequence is TANSASFDENPNTQNLT. Basic and acidic residues predominate over residues 296–308; that stretch reads PKSEGKKGEDMER. Low complexity predominate over residues 348–362; it reads ENGQEQSEESGQSEN. 5 C2H2-type zinc fingers span residues 387 to 409, 450 to 472, 478 to 500, 506 to 528, and 534 to 556; these read YVCIPCGKGFPSSEELNAHVETH, FSCSVCNKSYKDPATLRQHEKTH, FPCNICGKMFTQRGTMTRHMRSH, FACEECGMRFTRQYRLTEHMRVH, and YECQLCGGKFTQQRNLISHLRMH.

Belongs to the krueppel C2H2-type zinc-finger protein family. Hic subfamily.

Its subcellular location is the nucleus. Transcriptional repressor. This Danio rerio (Zebrafish) protein is Hypermethylated in cancer 2 protein (hic2).